An 85-amino-acid chain; its full sequence is Fungal defensin triintsin (85 aa).

The signal sequence occupies residues 1–21 (MQFTKLATVLIVSLMGSAAIA). Positions 22 to 47 (APSVDNAPAVAAEEVAAAPAENLEKR) are excised as a propeptide. Disulfide bonds link C51–C72, C58–C80, and C62–C82.

The protein belongs to the invertebrate defensin family. In terms of processing, disulfide bonds are essential for antimicrobial activity.

The protein resides in the secreted. In terms of biological role, antimicrobial peptide with broad-spectrum activity against Gram-positive bacteria, Gram-negative bacteria, and fungi. Also inhibits clinical isolates, including methicillin-resistant S.aureus (MRSA) (MIC=32 uM), K.pneumoniae, C.albicans and C.parapsilosis. Displays minimal inhibitory concentration (MIC) values similar to minimal bactericidal concentrations (MBC), suggesting a disruptive mechanism mode of action associated with membrane lysis. In vitro, shows hemolytic activity against human red blood cells. The protein is Fungal defensin triintsin of Trichophyton interdigitale (strain MR816).